Here is a 752-residue protein sequence, read N- to C-terminus: MSDMAERLALHEFTENAYLNYSMYVIMDRALPFIGDGLKPVQRRIVYAMSELGLNATAKFKKSARTVGDVLGKYHPHGDSACYEAMVLMAQPFSYRYPLVDGQGNWGAPDDPKSFAAMRYTESRLSKYAELLLSELGQGTADWVPNFDGTMQEPKMLPARLPNILLNGTTGIAVGMATDIPPHNLREVAKAAITLIEQPKTTLDQLLDIVQGPDYPTEAEIITPRAEIRKIYENGRGSVRMRAVWTKEDGAVVISALPHQVSGAKVLEQIAAQMRNKKLPMVDDLRDESDHENPTRLVIVPRSNRVDMEQVMNHLFATTDLEKSYRINLNMIGLDGRPAVKNLLEILTEWLAFRRDTVRRRLNYRLEKVLKRLHILEGLLVAFLNIDEVIEIIRSEDEPKPALMSRFGISETQAEAILELKLRHLAKLEEMKIRGEQDELEKERDQLQGILASERKMNTLLKKELQADADAYGDDRRSPLREREEAKAMSEHDMLPSEPVTIVLSQMGWVRSAKGHDIDAPGLNYKAGDSFKAAVKGKSNQPVVFIDTTGRSYAIDPITLPSARGQGEPLTGKLTLPPGATVEHMLMEGDDQKLLMASDAGYGFVCTFNDLVARNRAGKTLITLPENAHVMPPLVIEDEHDMLLAITQAGRMLMFPVDSLPQLSKGKGNKIINIPSAEAAKGDDGLAHLYVLPPQSTLTIHVGKRKIKLRPEELQKVVGERGRRGTLMRGLQRIDRIEIDSPHRVSHGDSEE.

Positions 31–494 (LPFIGDGLKP…EAKAMSEHDM (464 aa)) constitute a Topo IIA-type catalytic domain. Tyr-120 (O-(5'-phospho-DNA)-tyrosine intermediate) is an active-site residue. Residues 472-492 (YGDDRRSPLREREEAKAMSEH) are disordered. A compositionally biased stretch (basic and acidic residues) spans 473-492 (GDDRRSPLREREEAKAMSEH).

The protein belongs to the type II topoisomerase GyrA/ParC subunit family. ParC type 1 subfamily. Heterotetramer composed of ParC and ParE.

It localises to the cell membrane. The enzyme catalyses ATP-dependent breakage, passage and rejoining of double-stranded DNA.. Its function is as follows. Topoisomerase IV is essential for chromosome segregation. It relaxes supercoiled DNA. Performs the decatenation events required during the replication of a circular DNA molecule. This chain is DNA topoisomerase 4 subunit A, found in Salmonella typhimurium (strain LT2 / SGSC1412 / ATCC 700720).